The primary structure comprises 583 residues: Probable GTP diphosphokinase CRSH, chloroplastic (583 aa).

The N-terminal 58 residues, 1-58 (MSVIRPSPIPIPRCRSQVLHRRLYSIQLIQRRRRRWNPRSEVEDTAIESTARSPEAAG), are a transit peptide targeting the chloroplast. The HD domain occupies 112-212 (PLSKALSLSI…MDLVSKLDEM (101 aa)). 2 consecutive EF-hand domains span residues 470–505 (TTTN…LGAP) and 507–539 (EDAE…VEFM). Ca(2+) is bound by residues Asp-483, Asn-485, Asp-487, Met-489, Glu-494, Asp-517, Asn-519, Asp-521, Ser-523, and Glu-528.

This sequence belongs to the RelA/SpoT family. In terms of tissue distribution, expressed in shoots, cotyledons, rosette and cauline leaves, stems, sepals, pistils and siliques.

The protein localises to the plastid. Its subcellular location is the chloroplast. It catalyses the reaction GTP + ATP = guanosine 3'-diphosphate 5'-triphosphate + AMP. Its activity is regulated as follows. Activated by calcium. Functionally, possesses calcium-dependent ppGpp (guanosine 3'-diphosphate 5'-diphosphate) synthetase activity in vitro and is able to functionally complement E.coli relA mutants. Plays an important role in the timing adjustment of pistil and pollen maturation required for successful pollination. May be involved in a rapid plant ppGpp-mediated response to pathogens and other stresses. The protein is Probable GTP diphosphokinase CRSH, chloroplastic (CRSH) of Arabidopsis thaliana (Mouse-ear cress).